The sequence spans 462 residues: MAAESSSQLSLLSDLTPPSLERTWLSAPHPTLPIVATCSSDKTVRVYSLTNFRLLSTITGGHKRSVRTCAWKPHVKGESVLATGSFDATVGIWRRWDSYGQTERGIEDWHRADTHDHADDMTNGNGAAGIDNDGGDGADEDDEEWRFAVLLDGHDSEVKSVSWSPSGMLLATCSRDKSIWIWEDLDDGDNNFETVAVMQEHQGDVKCVAWHPVEECLASASYDDTIRLWREDLDDWGQVACIKGHQGTVWCVDWEGAENVPSAPTDLADGDLATAQWKKAHALSGPRLVSCSDDRTVRIWRRQPKEQQQHQAQPSPFGGSGIPSIIRPTGSDEFWDEECVLPQAHDLSIYTVAWSKRTGRLASVGADGRIVVYEERLVVGSTAETMETDPPTSADGTAADSPAALRTEWRVIATVDGAHGIYEINHVSWAKRADRGRTEGTDEEVLITTADDGTVKVWTLKM.

2 WD repeats span residues 15–57 (LTPP…LLST) and 61–103 (GHKR…GQTE). The interval 116–140 (DHADDMTNGNGAAGIDNDGGDGADE) is disordered. WD repeat units follow at residues 153 to 192 (GHDS…DNNF), 200 to 239 (EHQG…WGQV), 244 to 310 (GHQG…QQQH), 344 to 383 (AHDL…GSTA), and 418 to 459 (AHGI…KVWT). The segment at 303 to 323 (QPKEQQQHQAQPSPFGGSGIP) is disordered.

This sequence belongs to the WD repeat CIA1 family.

Functionally, essential component of the cytosolic iron-sulfur (Fe/S) protein assembly machinery. Required for the maturation of extramitochondrial Fe/S proteins. This is Probable cytosolic iron-sulfur protein assembly protein 1 (cia1) from Neosartorya fischeri (strain ATCC 1020 / DSM 3700 / CBS 544.65 / FGSC A1164 / JCM 1740 / NRRL 181 / WB 181) (Aspergillus fischerianus).